Reading from the N-terminus, the 160-residue chain is MVPKLFTSQICLLLLLGLMGVEGSLHARPPQFTRAQWFAIQHISLNPPRCTIAMRVINNYRWRCKNQNTFLRTTFANVVNVCGNQSIRCLHNRTLNNCHRSRFRVPLLHCDLINPGAQNISNCRYADRPGRRFYVVACDNRDPQDSPRYPVVPVHLDTTI.

A signal peptide spans 1–27; the sequence is MVPKLFTSQICLLLLLGLMGVEGSLHA. The tract at residues 28-72 is required for nearly all of the bactericidal activities; partially involved in LPS-binding; that stretch reads RPPQFTRAQWFAIQHISLNPPRCTIAMRVINNYRWRCKNQNTFLR. The active-site Proton acceptor is His42. Intrachain disulfides connect Cys50–Cys110, Cys64–Cys123, Cys82–Cys138, and Cys89–Cys98. Tyr60 is modified (3'-nitrotyrosine). 65–69 provides a ligand contact to substrate; sequence KNQNT. 3 N-linked (GlcNAc...) asparagine glycosylation sites follow: Asn84, Asn92, and Asn119. Catalysis depends on His155, which acts as the Proton donor.

It belongs to the pancreatic ribonuclease family. In terms of assembly, interacts with bacterial lipopolysaccharide (LPS) and lipoteichoic acid (LTA). In vitro interacts with phospholipid bilayers.

It is found in the secreted. Functionally, cytotoxin and helminthotoxin with low-efficiency ribonuclease activity. Possesses a wide variety of biological activities. Exhibits antibacterial activity. In Gorilla gorilla gorilla (Western lowland gorilla), this protein is Eosinophil cationic protein (RNASE3).